The sequence spans 284 residues: MIFLSQAQIDALLLEDIQGGDLTTRALNIGHQHGYIEFFLRQGGCVSGISVACKMLTTLGLTIDDAVSDGSQANAGQRLIRAQGNAAALHQGWKAVQNVLEWSCGVSDYLAQMLALLRERYPDGNIACTRKAIPGTRLLASQAILAAGGLIHRAGCAETILLFANHRHFLHDNQDWSGAINQLRRHAPEKKIVVEADAPKEAIAALRAQPDVLQLDKFSPQQATEIAQIAPSLAPHCTLALTGGINLTTLKNYLDCGIRLFITSAPYYAAPADIKVSLQPAASI.

The protein belongs to the NadC/ModD family.

The protein is Putative pyrophosphorylase ModD (modD) of Escherichia coli O127:H6 (strain E2348/69 / EPEC).